A 263-amino-acid chain; its full sequence is Protein IQ-DOMAIN 9 (263 aa).

The tract at residues 16–41 (SKQGTEKKKTSAVKPKKGSKKKGTSL) is disordered. A Nuclear localization signal 1 motif is present at residues 21–28 (EKKKTSAV). The segment covering 25-38 (TSAVKPKKGSKKKG) has biased composition (basic residues). One can recognise an IQ domain in the interval 46–75 (EDWAATRIQTAFKAYKARKSLRRLKGIARA). Residues 59–78 (AYKARKSLRRLKGIARAKLS) are calmodulin-binding. The Nuclear localization signal 2 motif lies at 107–114 (ARRVCMVT). The interval 216 to 263 (TPKKPKSSKTDSNSPAKRTVSLSSVPAKTPFPGARNTVKPRRLSFPGA) is disordered. Polar residues predominate over residues 226 to 241 (DSNSPAKRTVSLSSVP).

It belongs to the IQD family. Binds to multiple calmodulin (CaM) in the presence of Ca(2+) and CaM-like proteins.

Its subcellular location is the nucleus. The protein resides in the nuclear body. Its function is as follows. May be involved in cooperative interactions with calmodulins or calmodulin-like proteins. Recruits calmodulin proteins to microtubules, thus being a potential scaffold in cellular signaling and trafficking. May associate with nucleic acids and regulate gene expression at the transcriptional or post-transcriptional level. The polypeptide is Protein IQ-DOMAIN 9 (Arabidopsis thaliana (Mouse-ear cress)).